A 583-amino-acid chain; its full sequence is Zinc finger protein 277 (583 aa).

2 consecutive C2H2-type zinc fingers follow at residues 351 to 375 and 482 to 508; these read LQCL…KKQH and HQCK…DTKH.

The protein belongs to the ZNF277 family. Interacts (via zinc-finger domains) with RPS2/40S ribosomal protein S2, perhaps as nascent RPS2 is synthesized during translation; the interaction is direct; the interaction is extra-ribosomal. Interaction with RPS2 competes with the binding of RPS2 to protein arginine methyltransferase PRMT3. Interacts with Polycomb group (PcG) complex protein BMI1. May be part of a complex including at least ZNF277, BMI1 and RNF2/RING2.

It is found in the nucleus. Its subcellular location is the cytoplasm. The protein localises to the nucleolus. It localises to the chromosome. In terms of biological role, probable transcription factor. Involved in modulation of cellular senescence; represses transcription of the tumor suppressor gene INK4A/ARF, perhaps acting via the Polycomb group (PcG) complex PRC1. This Mus musculus (Mouse) protein is Zinc finger protein 277.